The primary structure comprises 262 residues: Transcription factor Adf-1 (262 aa).

A DNA-binding region (MADF) is located at residues Asn-24–Arg-104. The BESS domain maps to Ser-217–Leu-256.

Post-translationally, O-glycosylated; contains N-acetylglucosamine side chains.

The protein localises to the nucleus. May play an important role not only in the regulation of Adh expression but also in the transcription of other genes. The chain is Transcription factor Adf-1 (Adf1) from Drosophila melanogaster (Fruit fly).